The sequence spans 290 residues: Protease HtpX (290 aa).

The next 2 helical transmembrane spans lie at 4 to 24 (IMLFLATNLAVLIIASITLKL) and 36 to 56 (GSLLIFCAVFGFAGSLVSLFI). Histidine 142 lines the Zn(2+) pocket. The active site involves glutamate 143. Histidine 146 serves as a coordination point for Zn(2+). Transmembrane regions (helical) follow at residues 150 to 170 (GDMVTLALIQGVVNTFVMFFA) and 193 to 213 (FIATIFAELVLGILASIIVMW). Zn(2+) is bound at residue glutamate 219.

This sequence belongs to the peptidase M48B family. Requires Zn(2+) as cofactor.

It localises to the cell inner membrane. The polypeptide is Protease HtpX (Ectopseudomonas mendocina (strain ymp) (Pseudomonas mendocina)).